Consider the following 221-residue polypeptide: Cytidylate kinase (221 aa).

An ATP-binding site is contributed by 11–19; that stretch reads GPCGAGKST.

The protein belongs to the cytidylate kinase family. Type 1 subfamily.

Its subcellular location is the cytoplasm. It catalyses the reaction CMP + ATP = CDP + ADP. It carries out the reaction dCMP + ATP = dCDP + ADP. This chain is Cytidylate kinase, found in Mycoplasmopsis agalactiae (strain NCTC 10123 / CIP 59.7 / PG2) (Mycoplasma agalactiae).